The primary structure comprises 354 residues: mRNA cap guanine-N(7) methyltransferase 2 (354 aa).

One can recognise an mRNA cap 0 methyltransferase domain in the interval 8–286; that stretch reads KPEQSHHRLF…LYATFIFQKP (279 aa). Residues Lys21, Asp61, and 88-89 contribute to the S-adenosyl-L-methionine site; that span reads DP.

This sequence belongs to the class I-like SAM-binding methyltransferase superfamily. mRNA cap 0 methyltransferase family.

Its subcellular location is the nucleus. The catalysed reaction is a 5'-end (5'-triphosphoguanosine)-ribonucleoside in mRNA + S-adenosyl-L-methionine = a 5'-end (N(7)-methyl 5'-triphosphoguanosine)-ribonucleoside in mRNA + S-adenosyl-L-homocysteine. Functionally, mRNA capping methyltransferase that methylates the N7 position of the added guanosine to the 5'-cap structure of mRNAs. Binds RNA containing 5'-terminal GpppC. This is mRNA cap guanine-N(7) methyltransferase 2 from Arabidopsis thaliana (Mouse-ear cress).